A 372-amino-acid polypeptide reads, in one-letter code: UDP-N-acetylglucosamine--N-acetylmuramyl-(pentapeptide) pyrophosphoryl-undecaprenol N-acetylglucosamine transferase (372 aa).

UDP-N-acetyl-alpha-D-glucosamine is bound by residues 16-18, N128, R164, S192, I250, and Q295; that span reads TGG.

It belongs to the glycosyltransferase 28 family. MurG subfamily.

Its subcellular location is the cell inner membrane. It catalyses the reaction di-trans,octa-cis-undecaprenyl diphospho-N-acetyl-alpha-D-muramoyl-L-alanyl-D-glutamyl-meso-2,6-diaminopimeloyl-D-alanyl-D-alanine + UDP-N-acetyl-alpha-D-glucosamine = di-trans,octa-cis-undecaprenyl diphospho-[N-acetyl-alpha-D-glucosaminyl-(1-&gt;4)]-N-acetyl-alpha-D-muramoyl-L-alanyl-D-glutamyl-meso-2,6-diaminopimeloyl-D-alanyl-D-alanine + UDP + H(+). It functions in the pathway cell wall biogenesis; peptidoglycan biosynthesis. Functionally, cell wall formation. Catalyzes the transfer of a GlcNAc subunit on undecaprenyl-pyrophosphoryl-MurNAc-pentapeptide (lipid intermediate I) to form undecaprenyl-pyrophosphoryl-MurNAc-(pentapeptide)GlcNAc (lipid intermediate II). The sequence is that of UDP-N-acetylglucosamine--N-acetylmuramyl-(pentapeptide) pyrophosphoryl-undecaprenol N-acetylglucosamine transferase from Paraburkholderia xenovorans (strain LB400).